Here is a 713-residue protein sequence, read N- to C-terminus: Polyribonucleotide nucleotidyltransferase (713 aa).

Residues aspartate 485 and aspartate 491 each coordinate Mg(2+). Positions 552–611 constitute a KH domain; sequence PRIYTMKIDPKKIKDVIGKGGATVRSLTEETGTSIDIDDDGTVKIAAVDKNAVQEVMSRI. Residues 621 to 689 enclose the S1 motif domain; that stretch reads GVVYKGKVTR…RQGRIRLTMK (69 aa). Residues 694–713 form a disordered region; sequence DQTKNEENLLQSEEGSPVQE. The segment covering 701 to 713 has biased composition (polar residues); sequence NLLQSEEGSPVQE.

Belongs to the polyribonucleotide nucleotidyltransferase family. Component of the RNA degradosome, which is a multiprotein complex involved in RNA processing and mRNA degradation. Requires Mg(2+) as cofactor.

It is found in the cytoplasm. The catalysed reaction is RNA(n+1) + phosphate = RNA(n) + a ribonucleoside 5'-diphosphate. Functionally, involved in mRNA degradation. Catalyzes the phosphorolysis of single-stranded polyribonucleotides processively in the 3'- to 5'-direction. The protein is Polyribonucleotide nucleotidyltransferase of Histophilus somni (strain 2336) (Haemophilus somnus).